A 135-amino-acid chain; its full sequence is NAD(P)H-quinone oxidoreductase subunit 3 (135 aa).

3 helical membrane-spanning segments follow: residues 15-35, 79-99, and 104-124; these read LMFV…AAAV, MFAL…PWAV, and LGLL…VALA.

Belongs to the complex I subunit 3 family. As to quaternary structure, NDH-1 can be composed of about 15 different subunits; different subcomplexes with different compositions have been identified which probably have different functions.

It is found in the cellular thylakoid membrane. The enzyme catalyses a plastoquinone + NADH + (n+1) H(+)(in) = a plastoquinol + NAD(+) + n H(+)(out). It carries out the reaction a plastoquinone + NADPH + (n+1) H(+)(in) = a plastoquinol + NADP(+) + n H(+)(out). NDH-1 shuttles electrons from an unknown electron donor, via FMN and iron-sulfur (Fe-S) centers, to quinones in the respiratory and/or the photosynthetic chain. The immediate electron acceptor for the enzyme in this species is believed to be plastoquinone. Couples the redox reaction to proton translocation, and thus conserves the redox energy in a proton gradient. Cyanobacterial NDH-1 also plays a role in inorganic carbon-concentration. This chain is NAD(P)H-quinone oxidoreductase subunit 3, found in Synechococcus sp. (strain CC9311).